Consider the following 134-residue polypeptide: Histone H2A (134 aa).

A compositionally biased stretch (gly residues) spans 1 to 10; that stretch reads MTGGKSGGKA. The disordered stretch occupies residues 1–24; it reads MTGGKSGGKASGSKNAQSRSSKAG. N6-acetyllysine occurs at positions 5 and 9. Glutamine 106 carries the post-translational modification N5-methylglutamine. The segment at 115 to 134 is disordered; it reads QNLLPKKTPKSGKGPGSQEL. Serine 131 carries the phosphoserine modification. Residues 131-132 carry the [ST]-Q motif motif; that stretch reads SQ.

It belongs to the histone H2A family. As to quaternary structure, the nucleosome is a histone octamer containing two molecules each of H2A, H2B, H3 and H4 assembled in one H3-H4 heterotetramer and two H2A-H2B heterodimers. The octamer wraps approximately 147 bp of DNA. Phosphorylated to form H2AS128ph (gamma-H2A) in response to DNA double-strand breaks (DSBs) generated by exogenous genotoxic agents and by stalled replication forks. Phosphorylation is dependent on the DNA damage checkpoint kinases mec1/ATR and tel1/ATM, spreads on either side of a detected DSB site and may mark the surrounding chromatin for recruitment of proteins required for DNA damage signaling and repair. Gamma-H2A is removed from the DNA prior to the strand invasion-primer extension step of the repair process and subsequently dephosphorylated. Dephosphorylation is necessary for efficient recovery from the DNA damage checkpoint. Post-translationally, acetylated by esa1 to form H2AK4ac and H2AK7ac.

The protein resides in the nucleus. It localises to the chromosome. Core component of nucleosome which plays a central role in DNA double strand break (DSB) repair. Nucleosomes wrap and compact DNA into chromatin, limiting DNA accessibility to the cellular machineries which require DNA as a template. Histones thereby play a central role in transcription regulation, DNA repair, DNA replication and chromosomal stability. DNA accessibility is regulated via a complex set of post-translational modifications of histones, also called histone code, and nucleosome remodeling. This chain is Histone H2A (httA), found in Aspergillus niger (strain ATCC MYA-4892 / CBS 513.88 / FGSC A1513).